We begin with the raw amino-acid sequence, 152 residues long: UPF0756 membrane protein CA_C0092 (152 aa).

The next 4 membrane-spanning stretches (helical) occupy residues 5–25 (IILV…VAIS), 50–70 (MFWG…QGNV), 82–102 (FVGI…GVGL), and 117–137 (LILG…GPLI).

Belongs to the UPF0756 family.

Its subcellular location is the cell membrane. The polypeptide is UPF0756 membrane protein CA_C0092 (Clostridium acetobutylicum (strain ATCC 824 / DSM 792 / JCM 1419 / IAM 19013 / LMG 5710 / NBRC 13948 / NRRL B-527 / VKM B-1787 / 2291 / W)).